Reading from the N-terminus, the 327-residue chain is Putative HTH-type transcriptional regulatory protein Mevan_1514 (327 aa).

The HTH cro/C1-type domain maps to 128-189; the sequence is LKETREKLNI…IKGINITDYF (62 aa). Positions 139–158 form a DNA-binding region, H-T-H motif; it reads VGELAEFSRVSRKTIYKYEQ.

The protein is Putative HTH-type transcriptional regulatory protein Mevan_1514 of Methanococcus vannielii (strain ATCC 35089 / DSM 1224 / JCM 13029 / OCM 148 / SB).